A 73-amino-acid chain; its full sequence is MAIQRGAKVRVLRKESYWYRDVGTVAAVDTSGILYPVIVRFDKINYYNINTNNFREDELEVVEEPKPKAKASS.

This sequence belongs to the PsaE family.

It is found in the cellular thylakoid membrane. Functionally, stabilizes the interaction between PsaC and the PSI core, assists the docking of the ferredoxin to PSI and interacts with ferredoxin-NADP oxidoreductase. This chain is Photosystem I reaction center subunit IV, found in Synechococcus sp. (strain JA-3-3Ab) (Cyanobacteria bacterium Yellowstone A-Prime).